The following is a 94-amino-acid chain: Host-modulation protein 11K (94 aa).

As to quaternary structure, interacts with host GRB2; this interaction alters host cell environment by modulating host signaling pathways.

The protein localises to the host cytoplasm. In terms of biological role, enhances viral DNA replication and virion release. Mechansitically, optimizes viral DNA replication by interacting with host GRB2 to inhibit the negative effect of ERK signaling on B19 viral replication. Plays a role in viral infectivity. Induces apoptosis of primary erythroid progenitor cells. The protein is Host-modulation protein 11K (11K) of Human parvovirus B19 (strain HV) (HPV B19).